Reading from the N-terminus, the 303-residue chain is Acetylglutamate kinase (303 aa).

Substrate contacts are provided by residues 68-69, R90, and N194; that span reads GG.

Belongs to the acetylglutamate kinase family. ArgB subfamily.

Its subcellular location is the cytoplasm. The catalysed reaction is N-acetyl-L-glutamate + ATP = N-acetyl-L-glutamyl 5-phosphate + ADP. It participates in amino-acid biosynthesis; L-arginine biosynthesis; N(2)-acetyl-L-ornithine from L-glutamate: step 2/4. Functionally, catalyzes the ATP-dependent phosphorylation of N-acetyl-L-glutamate. This is Acetylglutamate kinase from Psychrobacter arcticus (strain DSM 17307 / VKM B-2377 / 273-4).